Consider the following 108-residue polypeptide: uncharacterized protein (108 aa).

The interval 1-108 is disordered; that stretch reads MAKVTSEPQK…DKEQSETSVL (108 aa). The segment covering 26-56 has biased composition (basic residues); it reads KGRKKGKTPRQRRSRSGVKGLKTTRKAKRPL. Residues 58–70 show a composition bias toward polar residues; that stretch reads GSSSQKAGETNTP. Residues 73–92 show a composition bias toward basic residues; that stretch reads KPKKARGPILRGRYHRLKEK. Positions 93–108 are enriched in basic and acidic residues; it reads MKKEEADKEQSETSVL.

This is an uncharacterized protein from Homo sapiens (Human).